A 269-amino-acid chain; its full sequence is 4-hydroxy-tetrahydrodipicolinate reductase (269 aa).

NAD(+) contacts are provided by residues 10–15 (GANGRM), Glu-36, 99–101 (GTT), and 123–126 (AANF). Catalysis depends on His-156, which acts as the Proton donor/acceptor. His-157 provides a ligand contact to (S)-2,3,4,5-tetrahydrodipicolinate. The Proton donor role is filled by Lys-160. 166–167 (GT) serves as a coordination point for (S)-2,3,4,5-tetrahydrodipicolinate.

The protein belongs to the DapB family.

It is found in the cytoplasm. It catalyses the reaction (S)-2,3,4,5-tetrahydrodipicolinate + NAD(+) + H2O = (2S,4S)-4-hydroxy-2,3,4,5-tetrahydrodipicolinate + NADH + H(+). The catalysed reaction is (S)-2,3,4,5-tetrahydrodipicolinate + NADP(+) + H2O = (2S,4S)-4-hydroxy-2,3,4,5-tetrahydrodipicolinate + NADPH + H(+). Its pathway is amino-acid biosynthesis; L-lysine biosynthesis via DAP pathway; (S)-tetrahydrodipicolinate from L-aspartate: step 4/4. Its function is as follows. Catalyzes the conversion of 4-hydroxy-tetrahydrodipicolinate (HTPA) to tetrahydrodipicolinate. The chain is 4-hydroxy-tetrahydrodipicolinate reductase from Neisseria gonorrhoeae (strain ATCC 700825 / FA 1090).